Here is a 66-residue protein sequence, read N- to C-terminus: Large ribosomal subunit protein bL35 (66 aa).

It belongs to the bacterial ribosomal protein bL35 family.

In Wigglesworthia glossinidia brevipalpis, this protein is Large ribosomal subunit protein bL35.